The chain runs to 96 residues: Molybdopterin synthase sulfur carrier subunit (96 aa).

Gly-96 carries the 1-thioglycine; alternate modification. The residue at position 96 (Gly-96) is a Glycyl adenylate; alternate.

This sequence belongs to the MoaD family. MOCS2A subfamily. As to quaternary structure, heterotetramer; composed of 2 small (MOCS2A) and 2 large (MOCS2B) subunits. In terms of processing, C-terminal thiocarboxylation occurs in 2 steps, it is first acyl-adenylated (-COAMP) via the hesA/moeB/thiF part of MOCS3, then thiocarboxylated (-COSH) via the rhodanese domain of MOCS3.

Its subcellular location is the cytoplasm. Its pathway is cofactor biosynthesis; molybdopterin biosynthesis. Its function is as follows. Acts as a sulfur carrier required for molybdopterin biosynthesis. Component of the molybdopterin synthase complex that catalyzes the conversion of precursor Z into molybdopterin by mediating the incorporation of 2 sulfur atoms into precursor Z to generate a dithiolene group. In the complex, serves as sulfur donor by being thiocarboxylated (-COSH) at its C-terminus by MOCS3. After interaction with MOCS2B, the sulfur is then transferred to precursor Z to form molybdopterin. The protein is Molybdopterin synthase sulfur carrier subunit of Arabidopsis thaliana (Mouse-ear cress).